Here is a 429-residue protein sequence, read N- to C-terminus: Gamma-glutamyl phosphate reductase (429 aa).

Belongs to the gamma-glutamyl phosphate reductase family.

It localises to the cytoplasm. It carries out the reaction L-glutamate 5-semialdehyde + phosphate + NADP(+) = L-glutamyl 5-phosphate + NADPH + H(+). It functions in the pathway amino-acid biosynthesis; L-proline biosynthesis; L-glutamate 5-semialdehyde from L-glutamate: step 2/2. Catalyzes the NADPH-dependent reduction of L-glutamate 5-phosphate into L-glutamate 5-semialdehyde and phosphate. The product spontaneously undergoes cyclization to form 1-pyrroline-5-carboxylate. This Methylibium petroleiphilum (strain ATCC BAA-1232 / LMG 22953 / PM1) protein is Gamma-glutamyl phosphate reductase.